The primary structure comprises 232 residues: F420-dependent NADP reductase (232 aa).

NADP(+) contacts are provided by residues 15 to 18 (TGDQ), 37 to 38 (SR), K42, V80, V106, and A151.

Belongs to the F420-dependent NADP reductase family. As to quaternary structure, homotetramer.

The enzyme catalyses reduced coenzyme F420-(gamma-L-Glu)(n) + NADP(+) = oxidized coenzyme F420-(gamma-L-Glu)(n) + NADPH + 2 H(+). Functionally, catalyzes the reduction of NADP(+) with F420H(2) via hydride transfer, and likely the reverse reaction, i.e. the reduction of F420 with NADPH. Probably functions in the regeneration of NADPH required in biosynthetic reactions. Is specific for reduced F420 as electron donor for the reduction of NADP; neither reduced FAD nor FMN can act as electron donor. The enzyme is also specific for NADP; NAD is not utilized as substrate. This is F420-dependent NADP reductase (fno) from Methanothermobacter thermautotrophicus (strain ATCC 29096 / DSM 1053 / JCM 10044 / NBRC 100330 / Delta H) (Methanobacterium thermoautotrophicum).